The chain runs to 430 residues: tRNA(Ile)-lysidine synthase (430 aa).

21-26 provides a ligand contact to ATP; that stretch reads SGGLDS.

It belongs to the tRNA(Ile)-lysidine synthase family.

It is found in the cytoplasm. The catalysed reaction is cytidine(34) in tRNA(Ile2) + L-lysine + ATP = lysidine(34) in tRNA(Ile2) + AMP + diphosphate + H(+). Its function is as follows. Ligates lysine onto the cytidine present at position 34 of the AUA codon-specific tRNA(Ile) that contains the anticodon CAU, in an ATP-dependent manner. Cytidine is converted to lysidine, thus changing the amino acid specificity of the tRNA from methionine to isoleucine. This Salmonella schwarzengrund (strain CVM19633) protein is tRNA(Ile)-lysidine synthase.